The primary structure comprises 92 residues: DNA-binding protein HU-alpha (92 aa).

It belongs to the bacterial histone-like protein family. Heterodimer of an alpha and a beta chain.

Functionally, histone-like DNA-binding protein which is capable of wrapping DNA to stabilize it, and thus to prevent its denaturation under extreme environmental conditions. This Burkholderia pseudomallei (strain K96243) protein is DNA-binding protein HU-alpha (hupA).